Consider the following 869-residue polypeptide: Protein translocase subunit SecA (869 aa).

Residues Gln85, 103 to 107, and Asp508 each bind ATP; that span reads GEGKT.

The protein belongs to the SecA family. In terms of assembly, monomer and homodimer. Part of the essential Sec protein translocation apparatus which comprises SecA, SecYEG and auxiliary proteins SecDF. Other proteins may also be involved.

It localises to the cell membrane. The protein localises to the cytoplasm. It catalyses the reaction ATP + H2O + cellular proteinSide 1 = ADP + phosphate + cellular proteinSide 2.. Functionally, part of the Sec protein translocase complex. Interacts with the SecYEG preprotein conducting channel. Has a central role in coupling the hydrolysis of ATP to the transfer of proteins into and across the cell membrane, serving as an ATP-driven molecular motor driving the stepwise translocation of polypeptide chains across the membrane. This chain is Protein translocase subunit SecA, found in Deinococcus geothermalis (strain DSM 11300 / CIP 105573 / AG-3a).